Here is a 1083-residue protein sequence, read N- to C-terminus: MSSEREERTFRSSPVQQDDVRENISNENQEHPSPNPPSYASSMAESQTLLPKRPIIGGQTAKLQNKNRTSVHVAFADLPRDLPEIPDGISDRRRVHKEQQHLGLDTTPPVPPRPLSRLRDVNSHDKLPSIRSPRNLNYQPSVRSSRSGSIFDDAPSMAPPGGSYVSYGMHDDGSPQRPWTPSSRVSGFTRSDLSRPPPSDGMYEPSDLNGSPRPGTPSSRYGGSPRRPLPPAPLFSNSRQPVPPIADDATISIPLHDTYDDDVFAPESDLSDARPHPVDRSSYMSSESQDTLNEGDMEDYDKVEHYGPAPTGAQERRGVRAPQMSRKEVQLINGELVLECKIPTILYSFLPRRGEVEFTHMRYTAVTCDPDDFVERGYTLRQTFGKTVRETELFICVTMYNEDEIGFTRTMHAVMKNISHFCSRSRSRTWGETGWQKIVVCIVSDGREKIHPRTLDALAAMGVYQHGIAKNFVNNRAVQAHVYEYTTQVSLDSDLKFKGAEKGIVPCQMIFCLKEKNQRKLNSHRWFFNAFGKALNPNVCILLDVGTRPSGTSLYHLWKAFDTDSNVAGACGEIKAMKGRLGANLLNPLVASQNFEYKMSNILDKPLESVFGYITVLPGALSAYRYHALQNDETGHGPLSQYFKGETLHGQHADVFTANMYLAEDRILCWELVAKRGERWVLKYVKGCTGETDVPDTVPEFISQRRRWLNGAFFAAVYSLVHFKQIWFTDHTLARKILLHMEFLYQFIQLMFTFFSLANFYLTFYFVAGGLTDPKVDPFGHNIATVIFHILRYACVLLISTQFILSLGNRPQGSKKLYLISMIIYSIIMVYTTFATFYIIIHQLTSKDDKIEMGDNVFTNMIVSILSTIGMYFIMSILYLDPWHMITSSAQYFILLPSYICTLQVYAFCNTHDVTWGTKGDNVMKTDLGGAVGKGETVELEMPSEQLDIDSGYDEALRNLRDRLEVPESPPSESQLQEDYYKSVRTYLVLTWMIGNGILGMAVSEIYSARGIGDNYYLRFLLWSVAALAVFRAIGSTTFAVLNVINMIVEGRVRLSLKAPRWMGGLKERVNDKMSSVSSNLRS.

Basic and acidic residues-rich tracts occupy residues 1–10 and 18–30; these read MSSEREERTF and DDVR…ENQE. Disordered stretches follow at residues 1-248 and 260-294; these read MSSE…IADD and DDDV…TLNE. The N-linked (GlcNAc...) asparagine glycan is linked to asparagine 23. Polar residues-rich tracts occupy residues 38-49 and 61-70; these read SYASSMAESQTL and AKLQNKNRTS. Asparagine 67 carries an N-linked (GlcNAc...) asparagine glycan. 2 stretches are compositionally biased toward basic and acidic residues: residues 78–100 and 117–128; these read LPRD…KEQQ and RLRDVNSHDKLP. Polar residues-rich tracts occupy residues 132 to 148, 177 to 191, and 282 to 292; these read SPRN…SRSG, RPWT…FTRS, and SYMSSESQDTL. N-linked (GlcNAc...) asparagine glycosylation is present at asparagine 417. A run of 8 helical transmembrane segments spans residues 708-728, 747-767, 785-805, 820-840, 860-880, 889-909, 987-1007, and 1020-1040; these read WLNG…QIWF, FIQL…FYFV, TVIF…QFIL, ISMI…FYII, NMIV…ILYL, SAQY…YAFC, YLVL…SEIY, and FLLW…TTFA.

This sequence belongs to the chitin synthase family. Class II subfamily.

It is found in the cell membrane. It carries out the reaction [(1-&gt;4)-N-acetyl-beta-D-glucosaminyl](n) + UDP-N-acetyl-alpha-D-glucosamine = [(1-&gt;4)-N-acetyl-beta-D-glucosaminyl](n+1) + UDP + H(+). Polymerizes chitin, a structural polymer of the cell wall and septum, by transferring the sugar moiety of UDP-GlcNAc to the non-reducing end of the growing chitin polymer. Plays a critical role in cell wall integrity and virulence. This chain is Chitin synthase 2, found in Fusarium oxysporum f. sp. lycopersici (strain 4287 / CBS 123668 / FGSC 9935 / NRRL 34936) (Fusarium vascular wilt of tomato).